The following is a 341-amino-acid chain: Ferrochelatase (341 aa).

The Fe cation site is built by His-196 and Glu-277.

It belongs to the ferrochelatase family.

It localises to the cytoplasm. The catalysed reaction is heme b + 2 H(+) = protoporphyrin IX + Fe(2+). Its pathway is porphyrin-containing compound metabolism; protoheme biosynthesis; protoheme from protoporphyrin-IX: step 1/1. Its function is as follows. Catalyzes the ferrous insertion into protoporphyrin IX. This Synechococcus sp. (strain JA-3-3Ab) (Cyanobacteria bacterium Yellowstone A-Prime) protein is Ferrochelatase.